Reading from the N-terminus, the 461-residue chain is Tubulin gamma chain (461 aa).

Position 142–148 (142–148 (AGGTGSG)) interacts with GTP.

This sequence belongs to the tubulin family.

Its subcellular location is the cytoplasm. The protein localises to the cytoskeleton. It is found in the microtubule organizing center. It localises to the spindle pole body. Tubulin is the major constituent of microtubules. The gamma chain is found at microtubule organizing centers (MTOC) such as the spindle poles or the centrosome, suggesting that it is involved in the minus-end nucleation of microtubule assembly. The protein is Tubulin gamma chain (tbg) of Neurospora crassa (strain ATCC 24698 / 74-OR23-1A / CBS 708.71 / DSM 1257 / FGSC 987).